The primary structure comprises 316 residues: Tetrahydromethanopterin S-methyltransferase subunit H (316 aa).

Belongs to the MtrH family. The complex is composed of 8 subunits; MtrA, MtrB, MtrC, MtrD, MtrE, MtrF, MtrG and MtrH.

It carries out the reaction 5-methyl-5,6,7,8-tetrahydromethanopterin + coenzyme M + 2 Na(+)(in) = 5,6,7,8-tetrahydromethanopterin + methyl-coenzyme M + 2 Na(+)(out). It functions in the pathway one-carbon metabolism; methanogenesis from CO(2); methyl-coenzyme M from 5,10-methylene-5,6,7,8-tetrahydromethanopterin: step 2/2. Functionally, part of a complex that catalyzes the formation of methyl-coenzyme M and tetrahydromethanopterin from coenzyme M and methyl-tetrahydromethanopterin. This is an energy-conserving, sodium-ion translocating step. MtrH catalyzes the transfer of the methyl group from methyl-tetrahydromethanopterin to the corrinoid prosthetic group of MtrA. The sequence is that of Tetrahydromethanopterin S-methyltransferase subunit H from Methanosarcina acetivorans (strain ATCC 35395 / DSM 2834 / JCM 12185 / C2A).